The primary structure comprises 347 residues: UDP-3-O-acylglucosamine N-acyltransferase (347 aa).

The Proton acceptor role is filled by His-248.

The protein belongs to the transferase hexapeptide repeat family. LpxD subfamily. Homotrimer.

It carries out the reaction a UDP-3-O-[(3R)-3-hydroxyacyl]-alpha-D-glucosamine + a (3R)-hydroxyacyl-[ACP] = a UDP-2-N,3-O-bis[(3R)-3-hydroxyacyl]-alpha-D-glucosamine + holo-[ACP] + H(+). It functions in the pathway bacterial outer membrane biogenesis; LPS lipid A biosynthesis. In terms of biological role, catalyzes the N-acylation of UDP-3-O-acylglucosamine using 3-hydroxyacyl-ACP as the acyl donor. Is involved in the biosynthesis of lipid A, a phosphorylated glycolipid that anchors the lipopolysaccharide to the outer membrane of the cell. In Synechococcus sp. (strain CC9902), this protein is UDP-3-O-acylglucosamine N-acyltransferase.